A 188-amino-acid polypeptide reads, in one-letter code: dCTP deaminase (188 aa).

DCTP contacts are provided by residues 111 to 116 (KSTYAR), 135 to 137 (TLE), glutamine 156, tyrosine 170, and glutamine 180. The Proton donor/acceptor role is filled by glutamate 137.

Belongs to the dCTP deaminase family. In terms of assembly, homotrimer.

It carries out the reaction dCTP + H2O + H(+) = dUTP + NH4(+). It functions in the pathway pyrimidine metabolism; dUMP biosynthesis; dUMP from dCTP (dUTP route): step 1/2. Catalyzes the deamination of dCTP to dUTP. The polypeptide is dCTP deaminase (Laribacter hongkongensis (strain HLHK9)).